The primary structure comprises 293 residues: Probable metal transport system membrane protein CPn_0543/CP_0209/CPj0543/CpB0565 (293 aa).

7 consecutive transmembrane segments (helical) span residues 12-32, 41-61, 68-88, 101-121, 140-160, 183-203, and 253-273; these read LLIL…GGVM, IVSI…LTLW, LSFF…LCIG, LIAM…SRLP, PSDL…VVLC, LWYF…IYVM, and FPVG…SLCV.

The protein belongs to the ABC-3 integral membrane protein family.

It localises to the cell inner membrane. Functionally, part of an ATP-driven transport system CPn_0541/CPn_0542/CPn_0543 for a metal. In Chlamydia pneumoniae (Chlamydophila pneumoniae), this protein is Probable metal transport system membrane protein CPn_0543/CP_0209/CPj0543/CpB0565.